A 376-amino-acid chain; its full sequence is uncharacterized protein (376 aa).

Residues 24-44 (YLSIISIISVFLLNSSIVYSC) traverse the membrane as a helical segment. Residue His251 participates in Zn(2+) binding.

It belongs to the peptidase M23B family. It depends on Zn(2+) as a cofactor.

Its subcellular location is the cell membrane. This is an uncharacterized protein from Buchnera aphidicola subsp. Baizongia pistaciae (strain Bp).